A 150-amino-acid polypeptide reads, in one-letter code: Transcription antitermination protein NusB (150 aa).

The protein belongs to the NusB family.

Its function is as follows. Involved in transcription antitermination. Required for transcription of ribosomal RNA (rRNA) genes. Binds specifically to the boxA antiterminator sequence of the ribosomal RNA (rrn) operons. This Saccharophagus degradans (strain 2-40 / ATCC 43961 / DSM 17024) protein is Transcription antitermination protein NusB.